The primary structure comprises 417 residues: Biofilm dispersion protein BdlA (417 aa).

In terms of domain architecture, PAS 1 spans 1-66 (MAALDRSMAR…RRFWERLRRG (66 aa)). Positions 67–114 (EHFSGRCKRITREGRPLWLEATYNPVRDGQGRLLKVVKYASDIDAIVH) constitute a PAC 1 domain. Positions 115 to 188 (QEHEMQSKLD…ADLWRRLNRG (74 aa)) constitute a PAS 2 domain. In terms of domain architecture, PAC 2 spans 191 to 241 (VTGQFRRVHRNGQPVWLEASYNPVYDADGKLYKVVKFASDVSDRMRRYQAE). Residues 242 to 417 (ADNAHQAHTL…QFSRTLNADL (176 aa)) enclose the Methyl-accepting transducer domain.

Its function is as follows. Essential for biofilm dispersion by sensing environmental cues. May be involved in sensing and transducing signals within cells, resulting in the modulation of c-di-GMP levels, swimming motility and adhesiveness of the bacterial cell surface. This is Biofilm dispersion protein BdlA (bdlA) from Pseudomonas aeruginosa (strain ATCC 15692 / DSM 22644 / CIP 104116 / JCM 14847 / LMG 12228 / 1C / PRS 101 / PAO1).